The following is a 148-amino-acid chain: Ribonuclease H (148 aa).

The RNase H type-1 domain maps to 1 to 142 (MSDSVEMFTD…ADQLANRGVD (142 aa)). Residues aspartate 10, glutamate 48, aspartate 70, and aspartate 134 each contribute to the Mg(2+) site.

Belongs to the RNase H family. In terms of assembly, monomer. Requires Mg(2+) as cofactor.

It is found in the cytoplasm. The enzyme catalyses Endonucleolytic cleavage to 5'-phosphomonoester.. Endonuclease that specifically degrades the RNA of RNA-DNA hybrids. The chain is Ribonuclease H from Pseudomonas putida (strain ATCC 700007 / DSM 6899 / JCM 31910 / BCRC 17059 / LMG 24140 / F1).